The primary structure comprises 483 residues: Aspartyl/glutamyl-tRNA(Asn/Gln) amidotransferase subunit B (483 aa).

Belongs to the GatB/GatE family. GatB subfamily. Heterotrimer of A, B and C subunits.

It catalyses the reaction L-glutamyl-tRNA(Gln) + L-glutamine + ATP + H2O = L-glutaminyl-tRNA(Gln) + L-glutamate + ADP + phosphate + H(+). It carries out the reaction L-aspartyl-tRNA(Asn) + L-glutamine + ATP + H2O = L-asparaginyl-tRNA(Asn) + L-glutamate + ADP + phosphate + 2 H(+). Functionally, allows the formation of correctly charged Asn-tRNA(Asn) or Gln-tRNA(Gln) through the transamidation of misacylated Asp-tRNA(Asn) or Glu-tRNA(Gln) in organisms which lack either or both of asparaginyl-tRNA or glutaminyl-tRNA synthetases. The reaction takes place in the presence of glutamine and ATP through an activated phospho-Asp-tRNA(Asn) or phospho-Glu-tRNA(Gln). In Rickettsia typhi (strain ATCC VR-144 / Wilmington), this protein is Aspartyl/glutamyl-tRNA(Asn/Gln) amidotransferase subunit B.